The following is a 602-amino-acid chain: Elongation factor 4 (602 aa).

One can recognise a tr-type G domain in the interval 8-189; it reads KNIRNFSIIA…KIITTIPAPS (182 aa). Residues 20-25 and 136-139 each bind GTP; these read DHGKST and NKID.

Belongs to the TRAFAC class translation factor GTPase superfamily. Classic translation factor GTPase family. LepA subfamily.

Its subcellular location is the cell inner membrane. The catalysed reaction is GTP + H2O = GDP + phosphate + H(+). Required for accurate and efficient protein synthesis under certain stress conditions. May act as a fidelity factor of the translation reaction, by catalyzing a one-codon backward translocation of tRNAs on improperly translocated ribosomes. Back-translocation proceeds from a post-translocation (POST) complex to a pre-translocation (PRE) complex, thus giving elongation factor G a second chance to translocate the tRNAs correctly. Binds to ribosomes in a GTP-dependent manner. This is Elongation factor 4 from Helicobacter pylori (strain HPAG1).